A 273-amino-acid polypeptide reads, in one-letter code: Hydroxyethylthiazole kinase 2 (273 aa).

Methionine 45 lines the substrate pocket. Residues lysine 120 and threonine 173 each contribute to the ATP site. A substrate-binding site is contributed by glycine 200.

It belongs to the Thz kinase family. The cofactor is Mg(2+).

It carries out the reaction 5-(2-hydroxyethyl)-4-methylthiazole + ATP = 4-methyl-5-(2-phosphooxyethyl)-thiazole + ADP + H(+). It functions in the pathway cofactor biosynthesis; thiamine diphosphate biosynthesis; 4-methyl-5-(2-phosphoethyl)-thiazole from 5-(2-hydroxyethyl)-4-methylthiazole: step 1/1. In terms of biological role, catalyzes the phosphorylation of the hydroxyl group of 4-methyl-5-beta-hydroxyethylthiazole (THZ). The chain is Hydroxyethylthiazole kinase 2 from Leuconostoc mesenteroides subsp. mesenteroides (strain ATCC 8293 / DSM 20343 / BCRC 11652 / CCM 1803 / JCM 6124 / NCDO 523 / NBRC 100496 / NCIMB 8023 / NCTC 12954 / NRRL B-1118 / 37Y).